Here is a 430-residue protein sequence, read N- to C-terminus: Probable acetate kinase (430 aa).

Asn12 contacts Mg(2+). Lys19 provides a ligand contact to ATP. Arg100 is a binding site for substrate. Asp159 acts as the Proton donor/acceptor in catalysis. Position 220 to 224 (220 to 224) interacts with ATP; sequence HLGSG. Glu416 serves as a coordination point for Mg(2+).

This sequence belongs to the acetokinase family. Mg(2+) serves as cofactor.

It carries out the reaction acetate + ATP = acetyl phosphate + ADP. It functions in the pathway metabolic intermediate biosynthesis; acetyl-CoA biosynthesis; acetyl-CoA from acetate: step 1/2. This Cryptococcus neoformans var. neoformans serotype D (strain B-3501A) (Filobasidiella neoformans) protein is Probable acetate kinase.